The sequence spans 168 residues: Peptide deformylase (168 aa).

The Fe cation site is built by Cys91 and His133. Glu134 is a catalytic residue. His137 contacts Fe cation.

Belongs to the polypeptide deformylase family. Fe(2+) is required as a cofactor.

It catalyses the reaction N-terminal N-formyl-L-methionyl-[peptide] + H2O = N-terminal L-methionyl-[peptide] + formate. Functionally, removes the formyl group from the N-terminal Met of newly synthesized proteins. Requires at least a dipeptide for an efficient rate of reaction. N-terminal L-methionine is a prerequisite for activity but the enzyme has broad specificity at other positions. This Endomicrobium trichonymphae protein is Peptide deformylase.